Consider the following 857-residue polypeptide: Bifunctional uridylyltransferase/uridylyl-removing enzyme (857 aa).

Residues 1 to 322 (MDTTPELLLC…FPSESMVTRE (322 aa)) are uridylyltransferase. The tract at residues 323–679 (INDRFVERQG…ARISPAGEGL (357 aa)) is uridylyl-removing. The HD domain maps to 441–563 (VDQHILMVVR…VGNGRYLTAL (123 aa)). ACT domains follow at residues 680–760 (QVAV…DPTQ) and 788–857 (LLSV…ALAI).

It belongs to the GlnD family. It depends on Mg(2+) as a cofactor.

The catalysed reaction is [protein-PII]-L-tyrosine + UTP = [protein-PII]-uridylyl-L-tyrosine + diphosphate. It carries out the reaction [protein-PII]-uridylyl-L-tyrosine + H2O = [protein-PII]-L-tyrosine + UMP + H(+). Uridylyltransferase (UTase) activity is inhibited by glutamine, while glutamine activates uridylyl-removing (UR) activity. In terms of biological role, modifies, by uridylylation and deuridylylation, the PII regulatory proteins (GlnB and homologs), in response to the nitrogen status of the cell that GlnD senses through the glutamine level. Under low glutamine levels, catalyzes the conversion of the PII proteins and UTP to PII-UMP and PPi, while under higher glutamine levels, GlnD hydrolyzes PII-UMP to PII and UMP (deuridylylation). Thus, controls uridylylation state and activity of the PII proteins, and plays an important role in the regulation of nitrogen assimilation and metabolism. This Cupriavidus metallidurans (strain ATCC 43123 / DSM 2839 / NBRC 102507 / CH34) (Ralstonia metallidurans) protein is Bifunctional uridylyltransferase/uridylyl-removing enzyme.